The primary structure comprises 53 residues: UPF0391 membrane protein Acid_3618 (53 aa).

The next 2 helical transmembrane spans lie at 6 to 26 (LVFL…LAGA) and 28 to 48 (VGIA…AFLM).

The protein belongs to the UPF0391 family.

It is found in the cell membrane. The protein is UPF0391 membrane protein Acid_3618 of Solibacter usitatus (strain Ellin6076).